The sequence spans 1009 residues: Chitin synthase 2 (1009 aa).

Polar residues-rich tracts occupy residues 1–12 (MSYNNPNNSNSH) and 34–62 (EFLN…LNFQ). Disordered stretches follow at residues 1–62 (MSYN…LNFQ) and 175–234 (DESQ…EVRS). Residues 192–202 (EGEEEEEEGET) are compositionally biased toward acidic residues. A run of 7 helical transmembrane segments spans residues 647-667 (WLNG…KVWT), 682-702 (FFYQ…YFLV), 722-742 (ILSV…FVLS), 757-777 (IVIF…FMAV), 804-823 (LVVA…FLYF), 930-950 (VLVW…TGGF), and 967-987 (AAVF…FRFI).

The protein belongs to the chitin synthase family.

Its subcellular location is the cell membrane. The enzyme catalyses [(1-&gt;4)-N-acetyl-beta-D-glucosaminyl](n) + UDP-N-acetyl-alpha-D-glucosamine = [(1-&gt;4)-N-acetyl-beta-D-glucosaminyl](n+1) + UDP + H(+). In terms of biological role, polymerizes chitin, a structural polymer of the cell wall and septum, by transferring the sugar moiety of UDP-GlcNAc to the non-reducing end of the growing chitin polymer. In Candida albicans (Yeast), this protein is Chitin synthase 2 (CHS2).